Here is a 356-residue protein sequence, read N- to C-terminus: tRNA-specific 2-thiouridylase MnmA (356 aa).

Residues 6 to 13 and L32 contribute to the ATP site; that span reads AMSGGVDS. C101 (nucleophile) is an active-site residue. Cysteines 101 and 193 form a disulfide. Position 125 (G125) interacts with ATP. The segment at 143–145 is interaction with tRNA; that stretch reads KDQ. The Cysteine persulfide intermediate role is filled by C193.

This sequence belongs to the MnmA/TRMU family.

Its subcellular location is the cytoplasm. It catalyses the reaction S-sulfanyl-L-cysteinyl-[protein] + uridine(34) in tRNA + AH2 + ATP = 2-thiouridine(34) in tRNA + L-cysteinyl-[protein] + A + AMP + diphosphate + H(+). Its function is as follows. Catalyzes the 2-thiolation of uridine at the wobble position (U34) of tRNA, leading to the formation of s(2)U34. This Mycobacteroides abscessus (strain ATCC 19977 / DSM 44196 / CCUG 20993 / CIP 104536 / JCM 13569 / NCTC 13031 / TMC 1543 / L948) (Mycobacterium abscessus) protein is tRNA-specific 2-thiouridylase MnmA.